The primary structure comprises 95 residues: Small ribosomal subunit protein bS6 (95 aa).

The protein belongs to the bacterial ribosomal protein bS6 family.

Binds together with bS18 to 16S ribosomal RNA. In Corynebacterium jeikeium (strain K411), this protein is Small ribosomal subunit protein bS6.